The sequence spans 399 residues: Lysosomal acid lipase/cholesteryl ester hydrolase (399 aa).

Residues 1–27 (MKMRFLGLVVCLVLWTLHSEASGGKLT) form the signal peptide. A propeptide spans 28-76 (AVNPETNMNVSEIISYWGFPSEEYLVETEDGYILCLNRIPHGRKNHSDK) (removed in mature form). Asparagine 36, asparagine 72, asparagine 101, and asparagine 161 each carry an N-linked (GlcNAc...) asparagine glycan. An AB hydrolase-1 domain is found at 80–380 (PVVFLQHGLL…EWEHLDFIWG (301 aa)). Serine 174 serves as the catalytic Charge relay system. Residues asparagine 273 and asparagine 321 are each glycosylated (N-linked (GlcNAc...) asparagine). The active-site Charge relay system is the histidine 374.

Belongs to the AB hydrolase superfamily. Lipase family. Monomer. In terms of processing, glycosylation is not essential for catalytic activity.

It is found in the lysosome. It carries out the reaction a sterol ester + H2O = a sterol + a fatty acid + H(+). The enzyme catalyses cholesteryl (9Z-octadecenoate) + H2O = cholesterol + (9Z)-octadecenoate + H(+). The catalysed reaction is a triacylglycerol + H2O = a 1,2-diacylglycerol + a fatty acid + H(+). It catalyses the reaction 1,2-di-(9Z-octadecenoyl)-glycerol + (9Z)-octadecenoate + H(+) = 1,2,3-tri-(9Z-octadecenoyl)-glycerol + H2O. It carries out the reaction a 1,2-diacylglycerol + H2O = a 1-acylglycerol + a fatty acid + H(+). The enzyme catalyses 1,2-di-(9Z-octadecenoyl)-glycerol + H2O = 1-(9Z-octadecenoyl)-glycerol + (9Z)-octadecenoate + H(+). The catalysed reaction is a 1,3-diacylglycerol + H2O = a 1-acylglycerol + a fatty acid + H(+). It catalyses the reaction 1,3-di-(9Z-octadecenoyl)-glycerol + H2O = 1-(9Z-octadecenoyl)-glycerol + (9Z)-octadecenoate + H(+). Its function is as follows. Catalyzes the deacylation of cholesteryl ester core lipids of endocytosed low density lipoproteins to generate free fatty acids and cholesterol. Hydrolyzes triglycerides (1,2,3-triacylglycerol) and diglycerides (such as 1,2-diacylglycerol and 1,3-diacylglycerol) with preference for the acyl moieties at the sn-1 or sn-3 positions. The polypeptide is Lysosomal acid lipase/cholesteryl ester hydrolase (LIPA) (Macaca fascicularis (Crab-eating macaque)).